The sequence spans 258 residues: UPF0246 protein Jann_0444 (258 aa).

The protein belongs to the UPF0246 family.

The sequence is that of UPF0246 protein Jann_0444 from Jannaschia sp. (strain CCS1).